The primary structure comprises 424 residues: MASQKPHLNLITIGHVDHGKSTLVGRLLFEHGEIPAHIIEEYRKEAEQKGKATFEFAWVMDRFKEERERGVTIDLAHRKFETDKYYFTLIDAPGHRDFVKNMITGTSQADAAILVISAREGEGVMEQTREHAFLARTLGVPQIVVAINKMDATEPPFSEKRFNEVKADAEKLLKTIGYKDATFVPISGYKGDNVTKPSPNMPWYKGPSLLQALDAFKVPEKPINKPLRVPVEDVYSITGIGTVPVGRVETGVLKPGDKVIFLPADKQGDVKSIEMHHEPLQQAEPGDNIGFNVRGIAKNDIKRGDVCGHLDSPPTVVRAFTAQIVVLNHPSVIAPGYKPVFHVHTAQVACKIDEIVRTLNPKDGTTLKDKPDFIKTGDIAIVKVIPDKPLVIEKVSEIPQLGRFAVRDMGQTVAAGQCIDLEKR.

Positions 5–223 (KPHLNLITIG…DAFKVPEKPI (219 aa)) constitute a tr-type G domain. The segment at 14–21 (GHVDHGKS) is G1. 14–21 (GHVDHGKS) is a GTP binding site. Ser-21 contacts Mg(2+). The G2 stretch occupies residues 70–74 (GVTID). Positions 91–94 (DAPG) are G3. GTP contacts are provided by residues 91–95 (DAPGH) and 148–151 (NKMD). The tract at residues 148–151 (NKMD) is G4. The G5 stretch occupies residues 187-189 (SGY).

This sequence belongs to the TRAFAC class translation factor GTPase superfamily. Classic translation factor GTPase family. EF-Tu/EF-1A subfamily.

The protein resides in the cytoplasm. The enzyme catalyses GTP + H2O = GDP + phosphate + H(+). GTP hydrolase that promotes the GTP-dependent binding of aminoacyl-tRNA to the A-site of ribosomes during protein biosynthesis. This Thermoplasma volcanium (strain ATCC 51530 / DSM 4299 / JCM 9571 / NBRC 15438 / GSS1) protein is Elongation factor 1-alpha.